Here is a 260-residue protein sequence, read N- to C-terminus: Indole-3-glycerol phosphate synthase (260 aa).

Belongs to the TrpC family.

The catalysed reaction is 1-(2-carboxyphenylamino)-1-deoxy-D-ribulose 5-phosphate + H(+) = (1S,2R)-1-C-(indol-3-yl)glycerol 3-phosphate + CO2 + H2O. It functions in the pathway amino-acid biosynthesis; L-tryptophan biosynthesis; L-tryptophan from chorismate: step 4/5. In Bacteroides thetaiotaomicron (strain ATCC 29148 / DSM 2079 / JCM 5827 / CCUG 10774 / NCTC 10582 / VPI-5482 / E50), this protein is Indole-3-glycerol phosphate synthase.